A 140-amino-acid chain; its full sequence is Flagellar assembly factor FliW (140 aa).

The protein belongs to the FliW family. As to quaternary structure, interacts with translational regulator CsrA and flagellin(s).

The protein localises to the cytoplasm. In terms of biological role, acts as an anti-CsrA protein, binds CsrA and prevents it from repressing translation of its target genes, one of which is flagellin. Binds to flagellin and participates in the assembly of the flagellum. The sequence is that of Flagellar assembly factor FliW from Syntrophotalea carbinolica (strain DSM 2380 / NBRC 103641 / GraBd1) (Pelobacter carbinolicus).